Consider the following 81-residue polypeptide: Photosystem I iron-sulfur center (81 aa).

2 consecutive 4Fe-4S ferredoxin-type domains span residues 2–31 (SHSV…MIPW) and 39–68 (IASA…VRVY). [4Fe-4S] cluster contacts are provided by C11, C14, C17, C21, C48, C51, C54, and C58.

The eukaryotic PSI reaction center is composed of at least 11 subunits. The cofactor is [4Fe-4S] cluster.

Its subcellular location is the plastid. The protein localises to the chloroplast thylakoid membrane. The enzyme catalyses reduced [plastocyanin] + hnu + oxidized [2Fe-2S]-[ferredoxin] = oxidized [plastocyanin] + reduced [2Fe-2S]-[ferredoxin]. Its function is as follows. Apoprotein for the two 4Fe-4S centers FA and FB of photosystem I (PSI); essential for photochemical activity. FB is the terminal electron acceptor of PSI, donating electrons to ferredoxin. The C-terminus interacts with PsaA/B/D and helps assemble the protein into the PSI complex. Required for binding of PsaD and PsaE to PSI. PSI is a plastocyanin-ferredoxin oxidoreductase, converting photonic excitation into a charge separation, which transfers an electron from the donor P700 chlorophyll pair to the spectroscopically characterized acceptors A0, A1, FX, FA and FB in turn. The protein is Photosystem I iron-sulfur center of Zea mays (Maize).